A 189-amino-acid chain; its full sequence is Lipid A acyltransferase PagP (189 aa).

Positions 1–24 (MLRRFSLFSLGFLGWLLVSGNASA) are cleaved as a signal peptide. Active-site residues include His61, Asp104, and Ser105.

It belongs to the lipid A palmitoyltransferase family. Homodimer.

It is found in the cell outer membrane. The catalysed reaction is a lipid A + a 1,2-diacyl-sn-glycero-3-phosphocholine = a hepta-acyl lipid A + a 2-acyl-sn-glycero-3-phosphocholine. It catalyses the reaction a lipid IVA + a 1,2-diacyl-sn-glycero-3-phosphocholine = a lipid IVB + a 2-acyl-sn-glycero-3-phosphocholine. It carries out the reaction a lipid IIA + a 1,2-diacyl-sn-glycero-3-phosphocholine = a lipid IIB + a 2-acyl-sn-glycero-3-phosphocholine. Its function is as follows. Transfers a fatty acid residue from the sn-1 position of a phospholipid to the N-linked hydroxyfatty acid chain on the proximal unit of lipid A or its precursors. This Klebsiella pneumoniae subsp. pneumoniae (strain ATCC 700721 / MGH 78578) protein is Lipid A acyltransferase PagP.